The primary structure comprises 101 residues: Pro-corazonin (101 aa).

An N-terminal signal peptide occupies residues 1 to 16 (MLVLFVLSLVVSCALC). Asparagine amide is present on N27. Positions 31 to 101 (SNFPAEISAL…REKAPNNDNY (71 aa)) are excised as a propeptide.

It belongs to the corazonin family. In terms of tissue distribution, expressed in central brain and the retrocerebral complex but not in antennal lobes, optic lobes or in gnathal, thoracic and abdominal ganglia (at protein level).

The protein resides in the secreted. Cardioactive peptide. Corazonin is probably involved in the physiological regulation of the heart beat. The sequence is that of Pro-corazonin from Camponotus floridanus (Florida carpenter ant).